Reading from the N-terminus, the 429-residue chain is Histidine--tRNA ligase (429 aa).

It belongs to the class-II aminoacyl-tRNA synthetase family. Homodimer.

Its subcellular location is the cytoplasm. The enzyme catalyses tRNA(His) + L-histidine + ATP = L-histidyl-tRNA(His) + AMP + diphosphate + H(+). The sequence is that of Histidine--tRNA ligase from Desulfotalea psychrophila (strain LSv54 / DSM 12343).